The sequence spans 466 residues: Argininosuccinate lyase (466 aa).

It belongs to the lyase 1 family. Argininosuccinate lyase subfamily.

Its subcellular location is the cytoplasm. The catalysed reaction is 2-(N(omega)-L-arginino)succinate = fumarate + L-arginine. It functions in the pathway amino-acid biosynthesis; L-arginine biosynthesis; L-arginine from L-ornithine and carbamoyl phosphate: step 3/3. This chain is Argininosuccinate lyase, found in Syntrophobacter fumaroxidans (strain DSM 10017 / MPOB).